A 239-amino-acid polypeptide reads, in one-letter code: Cytochrome b6-f complex iron-sulfur subunit 1, cyanelle (239 aa).

The N-terminal 60 residues, 1-60 (MAFTTTAVVAPRGAKITGQSSTCAIQNGKTVAVGTSKQVGSFKPVFAAAKPAKETTFSVS), are a transit peptide targeting the cyanelle. The helical transmembrane segment at 81 to 101 (LLGAIAGPVAGAGGPFVSFLV) threads the bilayer. In terms of domain architecture, Rieske spans 125-221 (VSSWLETHKP…VSVLEDGVVA (97 aa)). Cysteine 167, histidine 169, cysteine 185, and histidine 188 together coordinate [2Fe-2S] cluster. Cysteines 172 and 187 form a disulfide.

Belongs to the Rieske iron-sulfur protein family. The 4 large subunits of the cytochrome b6-f complex are cytochrome b6, subunit IV (17 kDa polypeptide, petD), cytochrome f and the Rieske protein, while the 4 small subunits are petG, petL, petM and petN. The complex functions as a dimer. The cofactor is [2Fe-2S] cluster.

Its subcellular location is the plastid. The protein localises to the cyanelle thylakoid membrane. The enzyme catalyses 2 oxidized [plastocyanin] + a plastoquinol + 2 H(+)(in) = 2 reduced [plastocyanin] + a plastoquinone + 4 H(+)(out). Functionally, component of the cytochrome b6-f complex, which mediates electron transfer between photosystem II (PSII) and photosystem I (PSI), cyclic electron flow around PSI, and state transitions. This chain is Cytochrome b6-f complex iron-sulfur subunit 1, cyanelle (petC-1), found in Cyanophora paradoxa.